The chain runs to 126 residues: UPF0344 protein ABC2900 (126 aa).

Helical transmembrane passes span 16–36, 43–63, 66–86, and 104–124; these read ASHEGSWAILAILFLVAYFLF, AGTIIHMIARLFFVIMLVTGA, LIAYQFAYFFFIKGILAVLLI, and GMLFAVLVVLVVIVLMGYGII.

Belongs to the UPF0344 family.

It localises to the cell membrane. The protein is UPF0344 protein ABC2900 of Shouchella clausii (strain KSM-K16) (Alkalihalobacillus clausii).